Here is a 293-residue protein sequence, read N- to C-terminus: Probable aspartoacylase (293 aa).

H14 and E17 together coordinate Zn(2+). Substrate is bound by residues R56 and 63–64 (NR). A Zn(2+)-binding site is contributed by H106. The substrate site is built by E165 and Y276.

This sequence belongs to the AspA/AstE family. Aspartoacylase subfamily. Zn(2+) is required as a cofactor.

It carries out the reaction an N-acyl-L-aspartate + H2O = a carboxylate + L-aspartate. This Trichodesmium erythraeum (strain IMS101) protein is Probable aspartoacylase.